The following is a 173-amino-acid chain: Photosystem I assembly protein Ycf3 (173 aa).

TPR repeat units lie at residues alanine 35–proline 68, glycine 72–glutamine 105, and glycine 120–glycine 153.

The protein belongs to the Ycf3 family.

Its subcellular location is the cellular thylakoid membrane. Functionally, essential for the assembly of the photosystem I (PSI) complex. May act as a chaperone-like factor to guide the assembly of the PSI subunits. This chain is Photosystem I assembly protein Ycf3, found in Prochlorococcus marinus (strain MIT 9211).